Here is a 338-residue protein sequence, read N- to C-terminus: Plasminogen (338 aa).

One can recognise a Kringle 5 domain in the interval 9 to 88; it reads CMLGIGKGYQ…LFDYCDVPQC (80 aa). Intrachain disulfides connect Cys9–Cys88, Cys30–Cys71, Cys59–Cys83, Cys95–Cys213, Cys105–Cys113, Cys135–Cys151, Cys227–Cys294, Cys257–Cys273, and Cys284–Cys312. The 228-residue stretch at 109-336 folds into the Peptidase S1 domain; sequence IVGGCVAIAH…FINWIERIMQ (228 aa). Ser125 is subject to Phosphoserine. Residues His150 and Asp193 each act as charge relay system in the active site. Ser288 serves as the catalytic Charge relay system.

Belongs to the peptidase S1 family. Plasminogen subfamily. Interacts with CSPG4 and AMOT. Interacts (via the Kringle domains) with HRG; the interaction tethers PLG to the cell surface and enhances its activation. Interacts (via Kringle 4 domain) with ADA; the interaction stimulates PLG activation when in complex with DPP4. Angiostatin: Interacts with ATP5F1A; the interaction inhibits most of the angiogenic effects of angiostatin.

It localises to the secreted. The enzyme catalyses Preferential cleavage: Lys-|-Xaa &gt; Arg-|-Xaa, higher selectivity than trypsin. Converts fibrin into soluble products.. With respect to regulation, converted into plasmin by plasminogen activators, both plasminogen and its activator being bound to fibrin. Activated with catalytic amounts of streptokinase. Plasmin dissolves the fibrin of blood clots and acts as a proteolytic factor in a variety of other processes including embryonic development, tissue remodeling, tumor invasion, and inflammation. In ovulation, weakens the walls of the Graafian follicle. It activates the urokinase-type plasminogen activator, collagenases and several complement zymogens, such as C1, C4 and C5. Cleavage of fibronectin and laminin leads to cell detachment and apoptosis. Also cleaves fibrin, thrombospondin and von Willebrand factor. Its role in tissue remodeling and tumor invasion may be modulated by CSPG4. Binds to cells. In Equus caballus (Horse), this protein is Plasminogen (PLG).